Here is a 498-residue protein sequence, read N- to C-terminus: Glutamate--tRNA ligase (498 aa).

The short motif at 11-21 is the 'HIGH' region element; sequence PSPTGHLHIGN. The 'KMSKS' region signature appears at 261–265; the sequence is KLSKR. Lys264 contributes to the ATP binding site.

The protein belongs to the class-I aminoacyl-tRNA synthetase family. Glutamate--tRNA ligase type 1 subfamily. As to quaternary structure, monomer.

Its subcellular location is the cytoplasm. The catalysed reaction is tRNA(Glu) + L-glutamate + ATP = L-glutamyl-tRNA(Glu) + AMP + diphosphate. Its function is as follows. Catalyzes the attachment of glutamate to tRNA(Glu) in a two-step reaction: glutamate is first activated by ATP to form Glu-AMP and then transferred to the acceptor end of tRNA(Glu). This Oenococcus oeni (strain ATCC BAA-331 / PSU-1) protein is Glutamate--tRNA ligase.